Here is a 65-residue protein sequence, read N- to C-terminus: Large ribosomal subunit protein bL35 (65 aa).

Residues methionine 1–arginine 25 form a disordered region.

Belongs to the bacterial ribosomal protein bL35 family.

The sequence is that of Large ribosomal subunit protein bL35 from Francisella tularensis subsp. holarctica (strain FTNF002-00 / FTA).